The sequence spans 83 residues: U1-theraphotoxin-Hs1f (83 aa).

Positions 1 to 21 (MKVTLIAILTCAAVLVLHTTA) are cleaved as a signal peptide. The propeptide occupies 22–48 (AEELEESQLMEVGMPDTELAAVDEERL). 3 disulfide bridges follow: C51–C64, C55–C75, and C69–C80.

It belongs to the neurotoxin 12 (Hwtx-2) family. 02 (Hwtx-2) subfamily. Expressed by the venom gland.

The protein resides in the secreted. Functionally, lethal neurotoxin that blocks neuromuscular transmission. The sequence is that of U1-theraphotoxin-Hs1f from Cyriopagopus schmidti (Chinese bird spider).